An 86-amino-acid chain; its full sequence is Cell division topological specificity factor (86 aa).

Belongs to the MinE family.

Functionally, prevents the cell division inhibition by proteins MinC and MinD at internal division sites while permitting inhibition at polar sites. This ensures cell division at the proper site by restricting the formation of a division septum at the midpoint of the long axis of the cell. In Rhizobium rhizogenes (strain K84 / ATCC BAA-868) (Agrobacterium radiobacter), this protein is Cell division topological specificity factor.